A 254-amino-acid chain; its full sequence is Persulfide dioxygenase ETHE1, mitochondrial (254 aa).

Residues 1–7 (MAEAVLR) constitute a mitochondrion transit peptide. Ser-14 and Ser-19 each carry phosphoserine. Lys-66 is subject to N6-acetyllysine. Fe cation-binding residues include His-79, His-135, and Asp-154. Lys-172 is subject to N6-acetyllysine; alternate. N6-succinyllysine; alternate is present on Lys-172.

It belongs to the metallo-beta-lactamase superfamily. Glyoxalase II family. Homodimer. Monomer. Interacts with TST. May interact with RELA. Fe(2+) is required as a cofactor. Ubiquitously expressed.

It localises to the cytoplasm. The protein localises to the nucleus. Its subcellular location is the mitochondrion matrix. It carries out the reaction S-sulfanylglutathione + O2 + H2O = sulfite + glutathione + 2 H(+). With respect to regulation, glutathione increases enzyme activity. Its function is as follows. Sulfur dioxygenase that plays an essential role in hydrogen sulfide catabolism in the mitochondrial matrix. Hydrogen sulfide (H(2)S) is first oxidized by SQRDL, giving rise to cysteine persulfide residues. ETHE1 consumes molecular oxygen to catalyze the oxidation of the persulfide, once it has been transferred to a thiophilic acceptor, such as glutathione (R-SSH). Plays an important role in metabolic homeostasis in mitochondria by metabolizing hydrogen sulfide and preventing the accumulation of supraphysiological H(2)S levels that have toxic effects, due to the inhibition of cytochrome c oxidase. First described as a protein that can shuttle between the nucleus and the cytoplasm and suppress p53-induced apoptosis by sequestering the transcription factor RELA/NFKB3 in the cytoplasm and preventing its accumulation in the nucleus. The protein is Persulfide dioxygenase ETHE1, mitochondrial (ETHE1) of Homo sapiens (Human).